We begin with the raw amino-acid sequence, 134 residues long: Large ribosomal subunit protein bL17 (134 aa).

Belongs to the bacterial ribosomal protein bL17 family. Part of the 50S ribosomal subunit. Contacts protein L32.

This chain is Large ribosomal subunit protein bL17, found in Paracidovorax citrulli (strain AAC00-1) (Acidovorax citrulli).